Consider the following 230-residue polypeptide: Ribonuclease 3 (230 aa).

The RNase III domain maps to 10-133 (DPRLQSRIGY…IIGAIYVDSN (124 aa)). E46 lines the Mg(2+) pocket. Residue D50 is part of the active site. Residues D119 and E122 each coordinate Mg(2+). Residue E122 is part of the active site. Residues 161–230 (DPKSRLQEYL…AAEILKLLEQ (70 aa)) enclose the DRBM domain.

The protein belongs to the ribonuclease III family. In terms of assembly, homodimer. Mg(2+) serves as cofactor.

The protein resides in the cytoplasm. It carries out the reaction Endonucleolytic cleavage to 5'-phosphomonoester.. In terms of biological role, digests double-stranded RNA. Involved in the processing of primary rRNA transcript to yield the immediate precursors to the large and small rRNAs (23S and 16S). Processes some mRNAs, and tRNAs when they are encoded in the rRNA operon. Processes pre-crRNA and tracrRNA of type II CRISPR loci if present in the organism. The chain is Ribonuclease 3 from Acinetobacter baylyi (strain ATCC 33305 / BD413 / ADP1).